We begin with the raw amino-acid sequence, 787 residues long: MANILKRWVESDKRTIRRLDKIANKVEAYADEYGKLSDADLQAKTPEFRERYKEGESLDDLLPEAFATAREGAKRVLGLYPFHVQILGGIVLHQGDIAEMKTGEGKTLTATMPVYLNAISGKGVHVVTVNEYLSARDATEMGELYNWLGMSVGINGAEKSPEEKRAAYNADITYSTNGEIGFDYLRDNMVVYREDMVQRPLNFAIIDEVDSILIDEARTPLIISGQSEGTTGMYKRADRFAKTLTKDEDYKVDLESKTVALLDEGIRKAEKYFGLENLYDTDNTALNHYLDEALRANYIMLKDKDYVISDGQALIVDSFTGRIMDGRRFSDGLHQAIEAKEHVEIQEETKTMANITYQNLFRMYKKLSGMTGTAKTEQEEFREIYNMEVITIPTNRPMIRDDRSDLLYPTLQSKFNAVVKEIKQLHEKGQPMLIGTVAVETSEYLSHRLDEENIPHVVLNAKNHAKEADIVANAGQRGAVTIATNMAGRGTDIKLGPGVKEVGGLAVIGTERHESRRIDNQLRGRAGRQGDPGMSQFYLSLEDDLMLRFGSERIKNFLQRMNVEDDDAVIQSRMITRQVESAQKRVEGNNYDSRKNVLQYDDVMRAQREVIYGERQQVIMEEKSLKPVIMPMIKRTVERTVQLHMQGDAKDWDLDAVVDFAQAAMVKEDSISVADLKGKSPAEVEAYLMDRVDKIYADKAKQLYDAGQMLEFEKVVILRVVDSHWTDHIDAMDQLRQSIGLRGYGQLNPLVEYQRDGYQMFEEMVADIDYDTTRLFMKSEIRQNIQR.

Residues Q85, 103–107 (GEGKT), and D492 contribute to the ATP site.

Belongs to the SecA family. In terms of assembly, monomer and homodimer. Part of the essential Sec protein translocation apparatus which comprises SecA, SecYEG and auxiliary proteins SecDF. Other proteins may also be involved.

The protein localises to the cell membrane. Its subcellular location is the cytoplasm. The catalysed reaction is ATP + H2O + cellular proteinSide 1 = ADP + phosphate + cellular proteinSide 2.. Functionally, part of the Sec protein translocase complex. Interacts with the SecYEG preprotein conducting channel. Has a central role in coupling the hydrolysis of ATP to the transfer of proteins into and across the cell membrane, serving as an ATP-driven molecular motor driving the stepwise translocation of polypeptide chains across the membrane. The polypeptide is Protein translocase subunit SecA (Lactiplantibacillus plantarum (strain ATCC BAA-793 / NCIMB 8826 / WCFS1) (Lactobacillus plantarum)).